Consider the following 253-residue polypeptide: Core protein VP8 (253 aa).

Positions 1–31 (MNDLLLENLFGEKALCAQVTRDQLLEIIAAG) are excised as a propeptide.

This sequence belongs to the chordopoxvirinae VP8 family. Undergoes morphogenesis-associated proteolysis which cleaves the 28 kDa to a 25-kDa product. Proteolytic cleavage of major core proteins P4a (A10L), P4b (A3L), and VP8 (L4R), which occurs at a late stage of core formation, is required for production of infectious mature virions (MV).

The protein resides in the virion. Functionally, major core structural protein. This is Core protein VP8 from Vertebrata (FPV).